The chain runs to 122 residues: Large ribosomal subunit protein uL14 (122 aa).

It belongs to the universal ribosomal protein uL14 family. Part of the 50S ribosomal subunit. Forms a cluster with proteins L3 and L19. In the 70S ribosome, L14 and L19 interact and together make contacts with the 16S rRNA in bridges B5 and B8.

Binds to 23S rRNA. Forms part of two intersubunit bridges in the 70S ribosome. The polypeptide is Large ribosomal subunit protein uL14 (Bifidobacterium animalis subsp. lactis (strain AD011)).